Reading from the N-terminus, the 450-residue chain is tRNA modification GTPase MnmE (450 aa).

Residues lysine 21, glutamate 78, and lysine 117 each coordinate (6S)-5-formyl-5,6,7,8-tetrahydrofolate. The 164-residue stretch at 213-376 (GHALSIIGKP…LSQKISAFFP (164 aa)) folds into the TrmE-type G domain. Position 223 (asparagine 223) interacts with K(+). Residues 223–228 (NAGKSS), 242–248 (SDIKGTT), and 267–270 (DTAG) contribute to the GTP site. Serine 227 serves as a coordination point for Mg(2+). K(+) contacts are provided by serine 242, isoleucine 244, and threonine 247. Position 248 (threonine 248) interacts with Mg(2+). Position 450 (lysine 450) interacts with (6S)-5-formyl-5,6,7,8-tetrahydrofolate.

This sequence belongs to the TRAFAC class TrmE-Era-EngA-EngB-Septin-like GTPase superfamily. TrmE GTPase family. In terms of assembly, homodimer. Heterotetramer of two MnmE and two MnmG subunits. It depends on K(+) as a cofactor.

It is found in the cytoplasm. In terms of biological role, exhibits a very high intrinsic GTPase hydrolysis rate. Involved in the addition of a carboxymethylaminomethyl (cmnm) group at the wobble position (U34) of certain tRNAs, forming tRNA-cmnm(5)s(2)U34. The polypeptide is tRNA modification GTPase MnmE (Helicobacter acinonychis (strain Sheeba)).